We begin with the raw amino-acid sequence, 234 residues long: Glutathione S-transferase U11 (234 aa).

Residues 11–90 (EYVKLLGAWP…YVDETWLSGP (80 aa)) form the GST N-terminal domain. Glutathione is bound by residues 21–22 (SP), 47–48 (LS), 61–62 (QI), and 74–75 (ES). In terms of domain architecture, GST C-terminal spans 96-228 (DPFDRAVARF…KLVQFARLKF (133 aa)).

The protein belongs to the GST superfamily. Tau family.

Its subcellular location is the cytoplasm. It localises to the cytosol. The enzyme catalyses RX + glutathione = an S-substituted glutathione + a halide anion + H(+). Its function is as follows. May be involved in the conjugation of reduced glutathione to a wide number of exogenous and endogenous hydrophobic electrophiles and have a detoxification role against certain herbicides. The polypeptide is Glutathione S-transferase U11 (GSTU11) (Arabidopsis thaliana (Mouse-ear cress)).